The following is a 600-amino-acid chain: Na(+)/dicarboxylate cotransporter 3 (600 aa).

Residues 1–16 (MAALAALAKKVWSARR) are Cytoplasmic-facing. Residues 17–37 (LLVLLLVPLALLPILFALPPK) traverse the membrane as a helical segment. Residues 38-55 (EGRCLYVILLMAVYWCTE) are Extracellular-facing. Residues 56-76 (ALPLSVTALLPIILFPFMGIL) form a helical membrane-spanning segment. Over 77-82 (PSSKVC) the chain is Cytoplasmic. The helical transmembrane segment at 83–103 (PQYFLDTNFLFLSGLIMASAI) threads the bilayer. The Extracellular segment spans residues 104–137 (EERNLHRRIALKVLMLVGVQPARLILGMMVTTSF). The helical transmembrane segment at 138–158 (LSMWLSNTASTAMMLPIASAI) threads the bilayer. Residues 159-229 (LKSLFGQRDT…KEEEHRRNIW (71 aa)) are Cytoplasmic-facing. A helical membrane pass occupies residues 230–250 (KGFLISIPYSASIGGTATLTG). Topologically, residues 251–278 (TAPNLILLGQLKSFFPQCDVVNFGSWFI) are extracellular. A helical membrane pass occupies residues 279–299 (FAFPLMLLFLLVGWLWISFLY). Over 300 to 336 (GGMSWRGWRKKNSKLQDVAEDKAKAVIQEEFQNLGPI) the chain is Cytoplasmic. Residues 337-357 (KFAEQAVFILFCLFAILLFSR) form a helical membrane-spanning segment. Topologically, residues 358–372 (DPKFIPGWASLFAPG) are extracellular. The chain crosses the membrane as a helical span at residues 373–393 (FVSDAVTGVAIVTILFFFPSQ). The Cytoplasmic portion of the chain corresponds to 394-422 (KPSLKWWFDFKAPNSETEPLLSWKKAQET). Residues 423–443 (VPWNIILLLGGGFAMAKGCEE) constitute an intramembrane region (helical). Residues 444 to 461 (SGLSAWIGGQLHPLEHVP) lie on the Cytoplasmic side of the membrane. A helical transmembrane segment spans residues 462–482 (PLLAVLLITVVIAFFTEFASN). Over 483–505 (TATIIIFLPVLAELAIRLHVHPL) the chain is Extracellular. A helical transmembrane segment spans residues 506–526 (YLMIPGTVSCSYAFMLPVSTP). Over 527 to 546 (PNSIAFSTGHLLVKDMVRTG) the chain is Cytoplasmic. The helical transmembrane segment at 547 to 567 (LLMNLMGVLLLSLAMNTWAQA) threads the bilayer. Residues 568–600 (IFQLGTFPDWANTHAANVTALPPALTNNTVQTL) are Extracellular-facing. 2 N-linked (GlcNAc...) asparagine glycosylation sites follow: asparagine 584 and asparagine 594.

It belongs to the SLC13A/DASS transporter (TC 2.A.47) family. NADC subfamily. As to expression, highly expressed in proximal parts of straight tubules in the kidney. Detected in placenta, in brain, and in liver. Strongly expressed within the meningeal layers of supporting tissue that surround the brain and relatively weakly expressed throughout the cerebral cortex, hippocampus, and cerebellum.

Its subcellular location is the cell membrane. The catalysed reaction is succinate(out) + 3 Na(+)(out) = succinate(in) + 3 Na(+)(in). The enzyme catalyses 2-oxoglutarate(out) + 3 Na(+)(out) = 2-oxoglutarate(in) + 3 Na(+)(in). It carries out the reaction N-acetyl-L-aspartate(out) + 3 Na(+)(out) = N-acetyl-L-aspartate(in) + 3 Na(+)(in). It catalyses the reaction glutarate(out) + 3 Na(+)(out) = glutarate(in) + 3 Na(+)(in). The catalysed reaction is fumarate(out) + 3 Na(+)(out) = fumarate(in) + 3 Na(+)(in). The enzyme catalyses malate(out) + 3 Na(+)(out) = malate(in) + 3 Na(+)(in). It carries out the reaction 2,2-dimethylsuccinate(out) + 3 Na(+)(out) = 2,2-dimethylsuccinate(in) + 3 Na(+)(in). It catalyses the reaction 2,3-dimethylsuccinate(out) + 3 Na(+)(out) = 2,3-dimethylsuccinate(in) + 3 Na(+)(in). The catalysed reaction is itaconate(out) + 3 Na(+)(out) = itaconate(in) + 3 Na(+)(in). With respect to regulation, li(+) decreases succinate transport in the presence of Na(+). Its function is as follows. High-affinity sodium-dicarboxylate cotransporter that accepts a range of substrates with 4-6 carbon atoms, such as the citric acid cycle intermediates succinate and alpha-ketoglutarate (2-oxoglutarate), as well as other compounds including N-acetyl-L-aspartate. Transports the dicarboxylate into the cell with a probable stoichiometry of 3 Na(+) for 1 divalent dicarboxylate, rendering the process electrogenic. Can transport citrate in a Na(+)-dependent manner, recognizing the divalent form of citrate rather than the trivalent form which is normally found in blood. Imports itaconate in hepatocytes leading to activation of TFEB-dependent lysosomal biogenesis involved in antibacterial innate immune response. The chain is Na(+)/dicarboxylate cotransporter 3 (Slc13a3) from Rattus norvegicus (Rat).